The sequence spans 157 residues: Cytochrome c-type biogenesis protein CcmE (157 aa).

Residues 1–7 (MTPRQRR) are Cytoplasmic-facing. A helical; Signal-anchor for type II membrane protein transmembrane segment spans residues 8-28 (LGLLAAALACCGVAAALVLNA). Topologically, residues 29–157 (FRANLVFFFS…GAMAAQELRR (129 aa)) are periplasmic. 2 residues coordinate heme: H123 and Y127.

Belongs to the CcmE/CycJ family.

It localises to the cell inner membrane. Heme chaperone required for the biogenesis of c-type cytochromes. Transiently binds heme delivered by CcmC and transfers the heme to apo-cytochromes in a process facilitated by CcmF and CcmH. The chain is Cytochrome c-type biogenesis protein CcmE from Cupriavidus taiwanensis (strain DSM 17343 / BCRC 17206 / CCUG 44338 / CIP 107171 / LMG 19424 / R1) (Ralstonia taiwanensis (strain LMG 19424)).